The chain runs to 719 residues: Solute carrier family 15 member 2 (719 aa).

Over 1–43 the chain is Cytoplasmic; it reads MGKMKDKDVDAEKYEKAQRSPKLCGTNYPVSIAFIVVNEFCER. A helical transmembrane segment spans residues 44–61; it reads FSYYGMKAVLTLYFMNYL. The Extracellular portion of the chain corresponds to 62-69; that stretch reads HWDKNLST. The N-linked (GlcNAc...) asparagine glycan is linked to Asn66. A helical membrane pass occupies residues 70–90; it reads AIYHAFSGLCYFTPLLGALIA. Topologically, residues 91–99 are cytoplasmic; it reads DSWLGKFKT. Residues 100 to 120 traverse the membrane as a helical segment; sequence IIYLSIVYVIGHVVKSVGAIP. Residues 121–125 lie on the Extracellular side of the membrane; sequence DVGDS. A helical transmembrane segment spans residues 126–146; the sequence is TVHIALSMVGLGLIALGTGGI. The Cytoplasmic portion of the chain corresponds to 147 to 169; the sequence is KPCVAAFGGDQFDEDNIDERRKF. Residues 170-190 traverse the membrane as a helical segment; it reads FSIFYMSINAGSVLSTIITPI. Over 191–201 the chain is Extracellular; the sequence is LRGDVQCFGGD. The helical transmembrane segment at 202-222 threads the bilayer; the sequence is CYALAFGVPAALMVIALVVFI. The Cytoplasmic segment spans residues 223–280; that stretch reads SGSGLYKKSPPEGNVLVRVCKCIGFAISNRWTNSKKSPKRSHWLDWAEEKYSKRLIQE. The chain crosses the membrane as a helical span at residues 281-301; sequence IKMVCRVLVLYIPLPMFWALF. The Extracellular segment spans residues 302 to 334; that stretch reads DQQGSRWTLQATRMNMDFGGGFIIKPDQMQMLN. A helical membrane pass occupies residues 335-355; the sequence is ALLILVFIPIFDMGIYPLVGL. Topologically, residues 356–367 are cytoplasmic; it reads CRIKLTPLKKMA. Residues 368 to 388 form a helical membrane-spanning segment; it reads TGMILAALAFCAATAVEVYVI. Residues 389-594 are Extracellular-facing; it reads KTVVEPPPAK…QANNIHIGWQ (206 aa). Positions 389 to 594 are extracellular domain (ECD); the sequence is KTVVEPPPAK…QANNIHIGWQ (206 aa). N-linked (GlcNAc...) asparagine glycosylation is found at Asn481, Asn513, and Asn532. A helical transmembrane segment spans residues 595–615; the sequence is IPQYVFLTAGEVMFSITGLEF. The Cytoplasmic portion of the chain corresponds to 616–626; that stretch reads SYSQAPASMKS. Residues 627–647 traverse the membrane as a helical segment; the sequence is VLQAGWLMTVAFGNVIVLIVA. Residues 648 to 657 lie on the Extracellular side of the membrane; the sequence is EGAGMEQWVE. Residues 658-678 form a helical membrane-spanning segment; the sequence is FLLFAALLVAVSIIFSIMAYF. The Cytoplasmic segment spans residues 679 to 719; the sequence is YTYVDPDQLDKLFKEDGDGGKVESSKKDELSLGDMPKQTKM. A compositionally biased stretch (basic and acidic residues) spans 695–708; the sequence is GDGGKVESSKKDEL. Residues 695 to 719 form a disordered region; it reads GDGGKVESSKKDELSLGDMPKQTKM.

This sequence belongs to the major facilitator superfamily. Proton-dependent oligopeptide transporter (POT/PTR) (TC 2.A.17) family. Expressed in kidney, brain and gut. Also expressed weakly in eye, gill and skeletal muscle.

The protein resides in the apical cell membrane. The protein localises to the cytoplasmic vesicle. It is found in the phagosome membrane. It localises to the cell membrane. The catalysed reaction is a dipeptide(out) + 2 H(+)(out) = a dipeptide(in) + 2 H(+)(in). It catalyses the reaction N-acetyl-D-muramoyl-L-alanyl-D-isoglutamine(out) + 3 H(+)(out) = N-acetyl-D-muramoyl-L-alanyl-D-isoglutamine(in) + 3 H(+)(in). It carries out the reaction glycyl-L-leucine(out) + 2 H(+)(out) = glycyl-L-leucine(in) + 2 H(+)(in). The enzyme catalyses glycyl-L-lysine(out) + 2 H(+)(out) = glycyl-L-lysine(in) + 2 H(+)(in). The catalysed reaction is glycyl-L-glutamate(out) + 3 H(+)(out) = glycyl-L-glutamate(in) + 3 H(+)(in). It catalyses the reaction L-alanyl-L-alanine(out) + 2 H(+)(out) = L-alanyl-L-alanine(in) + 2 H(+)(in). It carries out the reaction an L-amino acid tripeptide(out) + 2 H(+)(out) = an L-amino acid tripeptide(in) + 2 H(+)(in). The enzyme catalyses carnosine(out) + 2 H(+)(out) = carnosine(in) + 2 H(+)(in). In terms of biological role, proton-coupled amino-acid transporter that transports oligopeptides of 2 to 4 amino acids with a preference for dipeptides. Transports neutral and anionic dipeptides with a proton to peptide stoichiometry of 2:1 or 3:1. The polypeptide is Solute carrier family 15 member 2 (Danio rerio (Zebrafish)).